Reading from the N-terminus, the 189-residue chain is dCTP deaminase (189 aa).

Residues 112-117 (KSTYAR), 136-138 (TLE), Gln-157, Tyr-171, and Gln-181 contribute to the dCTP site. The active-site Proton donor/acceptor is the Glu-138.

Belongs to the dCTP deaminase family. Homotrimer.

The catalysed reaction is dCTP + H2O + H(+) = dUTP + NH4(+). Its pathway is pyrimidine metabolism; dUMP biosynthesis; dUMP from dCTP (dUTP route): step 1/2. Catalyzes the deamination of dCTP to dUTP. The polypeptide is dCTP deaminase (Xanthomonas oryzae pv. oryzae (strain MAFF 311018)).